Reading from the N-terminus, the 106-residue chain is UPF0145 protein PputW619_2377 (106 aa).

Belongs to the UPF0145 family.

This is UPF0145 protein PputW619_2377 from Pseudomonas putida (strain W619).